Reading from the N-terminus, the 181-residue chain is Shikimate kinase (181 aa).

An ATP-binding site is contributed by 17 to 22 (GAGKTT). A Mg(2+)-binding site is contributed by threonine 21. Residues aspartate 39, arginine 63, and glycine 85 each contribute to the substrate site. Arginine 122 provides a ligand contact to ATP. Arginine 141 is a binding site for substrate.

It belongs to the shikimate kinase family. Monomer. Mg(2+) serves as cofactor.

It is found in the cytoplasm. The enzyme catalyses shikimate + ATP = 3-phosphoshikimate + ADP + H(+). Its pathway is metabolic intermediate biosynthesis; chorismate biosynthesis; chorismate from D-erythrose 4-phosphate and phosphoenolpyruvate: step 5/7. Catalyzes the specific phosphorylation of the 3-hydroxyl group of shikimic acid using ATP as a cosubstrate. This chain is Shikimate kinase, found in Nostoc sp. (strain PCC 7120 / SAG 25.82 / UTEX 2576).